The chain runs to 208 residues: Histone H1t (208 aa).

A compositionally biased stretch (polar residues) spans 1 to 12 (MSETAPAASSTL). The interval 1-39 (MSETAPAASSTLVPAPVEKPSSKRRGKKPGLAPARKPRG) is disordered. The residue at position 9 (Ser9) is a Phosphoserine. The region spanning 38 to 111 (RGFSVSKLIP…GASGSFKLSK (74 aa)) is the H15 domain. Arg56 carries the post-translational modification Citrulline. The disordered stretch occupies residues 95–208 (LVQTKGTGAS…TDLRKAAGRK (114 aa)). The span at 121–134 (KGKKSASAKAKKMG) shows a compositional bias: basic residues. At Ser141 the chain carries Phosphoserine. Residues 143-154 (KSSKTKAVKKPK) are compositionally biased toward basic residues. Thr156 is subject to Phosphothreonine. A phosphoserine mark is found at Ser163 and Ser178. A compositionally biased stretch (basic and acidic residues) spans 199-208 (TDLRKAAGRK).

This sequence belongs to the histone H1/H5 family. Phosphorylated in early spermatids. Post-translationally, citrullination at Arg-56 (H1R54ci) by PADI4 takes place within the DNA-binding site of H1 and results in its displacement from chromatin and global chromatin decondensation, thereby promoting pluripotency and stem cell maintenance. As to expression, testis-specific.

The protein localises to the nucleus. It localises to the chromosome. Functionally, testis-specific histone H1 that forms less compacted chromatin compared to other H1 histone subtypes. Formation of more relaxed chromatin may be required to promote chromatin architecture required for proper chromosome regulation during meiosis, such as homologous recombination. Histones H1 act as linkers that bind to nucleosomes and compact polynucleosomes into a higher-order chromatin configuration. In Mus musculus (Mouse), this protein is Histone H1t.